A 615-amino-acid polypeptide reads, in one-letter code: Delta(14)-sterol reductase LBR (615 aa).

One can recognise a Tudor domain in the interval 1-62 (MPSRKFADGE…DIKPLTSFRQ (62 aa)). Residues 1–211 (MPSRKFADGE…IRAKDLEFGG (211 aa)) are Nuclear-facing. Positions 53 to 109 (DIKPLTSFRQRKGGSTSSSPSRRRGSRSRSRSRSPGRPPKSARRSASASHQADIKEA) are disordered. At lysine 55 the chain carries N6-acetyllysine. Threonine 58 bears the Phosphothreonine mark. Phosphoserine occurs at positions 59 and 67. Phosphoserine; by CDK1 is present on residues serine 71 and serine 86. Over residues 73–86 (SRRRGSRSRSRSRS) the composition is skewed to basic residues. 2 positions are modified to phosphoserine: serine 97 and serine 99. Phosphothreonine is present on threonine 118. The residue at position 128 (serine 128) is a Phosphoserine. Threonine 200 carries the phosphothreonine modification. The next 8 helical transmembrane spans lie at 212–232 (VPGVFLIMFGLPVFLFLLLLM), 258–278 (VFGVYLLWFLIQVVFYLLPIG), 299–319 (FYAFILTSAVIGTSLFQGVEF), 326–346 (FLQFALAATVFCVVLSVYLYM), 415–435 (VPSLAMILVNSFQLLYVVDAL), 447–467 (IIHDGFGFMLAFGDLVWVPFI), 481–501 (EVSWPMASLIIVLKFCGYVIF), and 561–581 (ACGFNHILPYFYIIYFTMLLV). N6-acetyllysine occurs at positions 594 and 601.

Belongs to the ERG4/ERG24 family. As to quaternary structure, interacts with CBX5. Interacts with DNA. Interaction with DNA is sequence independent with higher affinity for supercoiled and relaxed circular DNA than linear DNA. Interacts with lamin B. Interacts with CLNK. Interacts with TMEM147; promoting LBR localization to the nucleus inner membrane. In terms of processing, phosphorylated by CDK1 in mitosis when the inner nuclear membrane breaks down into vesicles that dissociate from the lamina and the chromatin. It is phosphorylated by different protein kinases in interphase when the membrane is associated with these structures. Phosphorylation of LBR and HP1 proteins may be responsible for some of the alterations in chromatin organization and nuclear structure which occur at various times during the cell cycle. Phosphorylated by SRPK1. In late anaphase LBR is dephosphorylated, probably by PP1 and/or PP2A, allowing reassociation with chromatin.

The protein resides in the nucleus inner membrane. Its subcellular location is the nucleus. The protein localises to the cytoplasm. It localises to the endoplasmic reticulum membrane. The enzyme catalyses 5alpha-cholest-8,14-dien-3beta-ol + NADPH + H(+) = 5alpha-cholest-8-en-3beta-ol + NADP(+). It carries out the reaction 4,4-dimethyl-5alpha-cholesta-8,24-dien-3beta-ol + NADP(+) = 4,4-dimethyl-5alpha-cholesta-8,14,24-trien-3beta-ol + NADPH + H(+). It catalyses the reaction 4,4-dimethyl-8,14-cholestadien-3beta-ol + NADPH + H(+) = 4,4-dimethyl-5alpha-cholest-8-en-3beta-ol + NADP(+). It participates in steroid biosynthesis; cholesterol biosynthesis. Its function is as follows. Catalyzes the reduction of the C14-unsaturated bond of lanosterol, as part of the metabolic pathway leading to cholesterol biosynthesis. Plays a critical role in myeloid cell cholesterol biosynthesis which is essential to both myeloid cell growth and functional maturation. Mediates the activation of NADPH oxidases, perhaps by maintaining critical levels of cholesterol required for membrane lipid raft formation during neutrophil differentiation. Anchors the lamina and the heterochromatin to the inner nuclear membrane. The chain is Delta(14)-sterol reductase LBR (LBR) from Pongo abelii (Sumatran orangutan).